Here is a 2443-residue protein sequence, read N- to C-terminus: NFX1-type zinc finger-containing protein 1 homolog (2443 aa).

Disordered regions lie at residues 212–339, 545–566, and 583–672; these read PHKQ…EGDH, SSDSGRQVLSESRGAGSSNVYG, and HRDN…FVSP. Residues 246–263 are compositionally biased toward low complexity; sequence ISISNSSPPGLSSVSPIP. Residues 275-294 show a composition bias toward pro residues; sequence PQPPGLSIPAPPGISLPTPP. The span at 297-310 shows a compositional bias: polar residues; it reads SLQNHQNDQFEQAH. Low complexity predominate over residues 311–322; it reads STISRMSENSSS. A compositionally biased stretch (polar residues) spans 545–564; that stretch reads SSDSGRQVLSESRGAGSSNV. Basic and acidic residues-rich tracts occupy residues 601–638 and 662–672; these read GEVHRRLDEQQQQRHEDESSRYRDDSRQSRRADDRRDQ and EHSRDDKFVSP. The 506-residue stretch at 1040-1545 folds into the UvrD-like helicase ATP-binding domain; sequence MDESQRLAFC…MNLTISDKIV (506 aa). 1061–1068 lines the ATP pocket; that stretch reads GPPGTGKT. 4 consecutive NF-X1-type zinc fingers follow at residues 1769–1791, 1853–1873, 1912–1930, and 2027–2044; these read CGHVCERLCHPNMEEEHLQRCLY, CGHACAAKCGEECTLVSECSQ, CPHKCAEICGQPCTVECME, and CGHTCSAKCGESCPPCKA.

It belongs to the ZNFX1 family. As to quaternary structure, interacts with ego-1, csr-1, wago-1 and prg-1. Interacts with wago-4; the interaction promotes the transmission of epigenetic information across generations. Expressed in germs cells. Not expressed in somatic tissues.

The protein resides in the cytoplasm. The protein localises to the perinuclear region. It is found in the cytoplasmic granule. The catalysed reaction is ATP + H2O = ADP + phosphate + H(+). Epigenetic inheritance factor which, in association with the Argonaute protein wago-4, mediates small RNA-directed transgenerational epigenetic inheritance and thus balances the transgenerational inheritance of epigenetic information. Specifically, maintains a balanced production of small RNAs by preventing the spread of epigenetic signals towards the 5'-end of target mRNAs. Plays a role in small RNA-induced gene silencing in the germline. This Caenorhabditis elegans protein is NFX1-type zinc finger-containing protein 1 homolog.